The primary structure comprises 461 residues: CUGBP Elav-like family member 3 (461 aa).

RRM domains follow at residues 7 to 88 (IKLF…PADS) and 95 to 175 (RKLF…FADT). The span at 345-358 (PPALVAQQPPPPPQ) shows a compositional bias: pro residues. The tract at residues 345-375 (PPALVAQQPPPPPQQQQQQQQQQQQREGPDG) is disordered. A compositionally biased stretch (low complexity) spans 359 to 369 (QQQQQQQQQQQ). The region spanning 376-454 (CNIFIYHLPQ…KRLKVQLKRP (79 aa)) is the RRM 3 domain.

Belongs to the CELF/BRUNOL family.

It localises to the nucleus. It is found in the cytoplasm. In terms of biological role, RNA-binding protein involved in the regulation of pre-mRNA alternative splicing. Mediates exon inclusion and/or exclusion in pre-mRNA that are subject to tissue-specific and developmentally regulated alternative splicing. Specifically activates exon 5 inclusion of cardiac isoforms of TNNT2 during heart remodeling at the juvenile to adult transition. Activates the splicing of MAPT/Tau exon 10. Binds to muscle-specific splicing enhancer (MSE) intronic sites flanking the alternative exon 5 of TNNT2 pre-mRNA. The polypeptide is CUGBP Elav-like family member 3 (CELF3) (Bos taurus (Bovine)).